The primary structure comprises 214 residues: Probable nicotinate-nucleotide adenylyltransferase (214 aa).

Belongs to the NadD family.

The catalysed reaction is nicotinate beta-D-ribonucleotide + ATP + H(+) = deamido-NAD(+) + diphosphate. The protein operates within cofactor biosynthesis; NAD(+) biosynthesis; deamido-NAD(+) from nicotinate D-ribonucleotide: step 1/1. Functionally, catalyzes the reversible adenylation of nicotinate mononucleotide (NaMN) to nicotinic acid adenine dinucleotide (NaAD). The chain is Probable nicotinate-nucleotide adenylyltransferase from Mycobacterium tuberculosis (strain ATCC 25177 / H37Ra).